Consider the following 94-residue polypeptide: Co-chaperonin GroES (94 aa).

It belongs to the GroES chaperonin family. In terms of assembly, heptamer of 7 subunits arranged in a ring. Interacts with the chaperonin GroEL.

It localises to the cytoplasm. Functionally, together with the chaperonin GroEL, plays an essential role in assisting protein folding. The GroEL-GroES system forms a nano-cage that allows encapsulation of the non-native substrate proteins and provides a physical environment optimized to promote and accelerate protein folding. GroES binds to the apical surface of the GroEL ring, thereby capping the opening of the GroEL channel. This chain is Co-chaperonin GroES, found in Lactobacillus delbrueckii subsp. bulgaricus (strain ATCC BAA-365 / Lb-18).